A 932-amino-acid polypeptide reads, in one-letter code: Isoleucine--tRNA ligase (932 aa).

A 'HIGH' region motif is present at residues 57–67 (PYANGDIHIGT). Glutamate 559 contacts L-isoleucyl-5'-AMP. The 'KMSKS' region motif lies at 600–604 (KMSKS). Residue lysine 603 coordinates ATP. Zn(2+)-binding residues include cysteine 899, cysteine 902, cysteine 919, and cysteine 922.

It belongs to the class-I aminoacyl-tRNA synthetase family. IleS type 1 subfamily. As to quaternary structure, monomer. The cofactor is Zn(2+).

The protein localises to the cytoplasm. The enzyme catalyses tRNA(Ile) + L-isoleucine + ATP = L-isoleucyl-tRNA(Ile) + AMP + diphosphate. Catalyzes the attachment of isoleucine to tRNA(Ile). As IleRS can inadvertently accommodate and process structurally similar amino acids such as valine, to avoid such errors it has two additional distinct tRNA(Ile)-dependent editing activities. One activity is designated as 'pretransfer' editing and involves the hydrolysis of activated Val-AMP. The other activity is designated 'posttransfer' editing and involves deacylation of mischarged Val-tRNA(Ile). In Thermoanaerobacter pseudethanolicus (strain ATCC 33223 / 39E) (Clostridium thermohydrosulfuricum), this protein is Isoleucine--tRNA ligase.